Here is a 410-residue protein sequence, read N- to C-terminus: Protein trichome birefringence-like 34 (410 aa).

Residues 13-33 form a helical; Signal-anchor for type II membrane protein membrane-spanning segment; sequence TSFHTIAAVLVAGLIFTAVFL. The GDS motif motif lies at 133–135; it reads GDS. Positions 383-397 match the DCXHWCLPGXXDXWN motif motif; sequence DCIHWCLPGVPDVWN.

This sequence belongs to the PC-esterase family. TBL subfamily.

It localises to the golgi apparatus membrane. In terms of biological role, may act as a bridging protein that binds pectin and other cell wall polysaccharides. Probably involved in maintaining esterification of pectins. May be involved in the specific O-acetylation of cell wall polymers. This is Protein trichome birefringence-like 34 (TBL34) from Arabidopsis thaliana (Mouse-ear cress).